Consider the following 324-residue polypeptide: MELLPHEKQVVEYEKTIADFKEKNKENSLLSSSEIQKLENRLDRLKEKIYSNLTPWERVQICRHPSRPRTINYIEGMCEEFVELCGDRTFRDDPAVVGGFAKIQGQRFMLIGQEKGCDTTSRMHRNFGMLCPEGFRKALRLAKMAEKFGLPIIFLVDTPGAFPGLTAEERGQGWAIATNLFELARLATPIIVVVIGEGCSGGALGMAIGDVVAMLEHSYYSVISPEGCASILWKDPKKNSDAAAMLKMHGEDLKGFAIVDAVIKEPIGGAHHNPVATYRSVQEYVLQEWLKLKDLPVEELLEKRYQKFRTIGLYETSSESSSEA.

Positions 41–291 (RLDRLKEKIY…QEYVLQEWLK (251 aa)) constitute a CoA carboxyltransferase C-terminal domain.

It belongs to the AccA family. In terms of assembly, acetyl-CoA carboxylase is a heterohexamer composed of biotin carboxyl carrier protein (AccB), biotin carboxylase (AccC) and two subunits each of ACCase subunit alpha (AccA) and ACCase subunit beta (AccD).

Its subcellular location is the cytoplasm. It carries out the reaction N(6)-carboxybiotinyl-L-lysyl-[protein] + acetyl-CoA = N(6)-biotinyl-L-lysyl-[protein] + malonyl-CoA. It functions in the pathway lipid metabolism; malonyl-CoA biosynthesis; malonyl-CoA from acetyl-CoA: step 1/1. In terms of biological role, component of the acetyl coenzyme A carboxylase (ACC) complex. First, biotin carboxylase catalyzes the carboxylation of biotin on its carrier protein (BCCP) and then the CO(2) group is transferred by the carboxyltransferase to acetyl-CoA to form malonyl-CoA. The polypeptide is Acetyl-coenzyme A carboxylase carboxyl transferase subunit alpha (Chlamydia muridarum (strain MoPn / Nigg)).